A 372-amino-acid polypeptide reads, in one-letter code: Queuine tRNA-ribosyltransferase (372 aa).

Residue aspartate 89 is the Proton acceptor of the active site. Substrate is bound by residues 89 to 93 (DSGGF), aspartate 161, and glycine 232. The tract at residues 262 to 268 (GIGDLPS) is RNA binding. Aspartate 281 serves as the catalytic Nucleophile. The interval 286–290 (TKAAR) is RNA binding; important for wobble base 34 recognition. Residues cysteine 319, cysteine 321, cysteine 324, and histidine 351 each coordinate Zn(2+).

It belongs to the queuine tRNA-ribosyltransferase family. In terms of assembly, homodimer. Within each dimer, one monomer is responsible for RNA recognition and catalysis, while the other monomer binds to the replacement base PreQ1. Zn(2+) serves as cofactor.

The catalysed reaction is 7-aminomethyl-7-carbaguanine + guanosine(34) in tRNA = 7-aminomethyl-7-carbaguanosine(34) in tRNA + guanine. It functions in the pathway tRNA modification; tRNA-queuosine biosynthesis. In terms of biological role, catalyzes the base-exchange of a guanine (G) residue with the queuine precursor 7-aminomethyl-7-deazaguanine (PreQ1) at position 34 (anticodon wobble position) in tRNAs with GU(N) anticodons (tRNA-Asp, -Asn, -His and -Tyr). Catalysis occurs through a double-displacement mechanism. The nucleophile active site attacks the C1' of nucleotide 34 to detach the guanine base from the RNA, forming a covalent enzyme-RNA intermediate. The proton acceptor active site deprotonates the incoming PreQ1, allowing a nucleophilic attack on the C1' of the ribose to form the product. After dissociation, two additional enzymatic reactions on the tRNA convert PreQ1 to queuine (Q), resulting in the hypermodified nucleoside queuosine (7-(((4,5-cis-dihydroxy-2-cyclopenten-1-yl)amino)methyl)-7-deazaguanosine). The chain is Queuine tRNA-ribosyltransferase from Chlamydia trachomatis serovar L2 (strain ATCC VR-902B / DSM 19102 / 434/Bu).